The primary structure comprises 100 residues: Large ribosomal subunit protein uL23 (100 aa).

Belongs to the universal ribosomal protein uL23 family. In terms of assembly, part of the 50S ribosomal subunit. Contacts protein L29, and trigger factor when it is bound to the ribosome.

In terms of biological role, one of the early assembly proteins it binds 23S rRNA. One of the proteins that surrounds the polypeptide exit tunnel on the outside of the ribosome. Forms the main docking site for trigger factor binding to the ribosome. This is Large ribosomal subunit protein uL23 from Shewanella denitrificans (strain OS217 / ATCC BAA-1090 / DSM 15013).